The chain runs to 409 residues: Probable ATP-dependent RNA helicase MG308 homolog (409 aa).

In terms of domain architecture, Helicase ATP-binding spans 26–179 (VFKVWPRQNV…RKQVAPLTVV (154 aa)). Residue 39–46 (AETGSGKT) participates in ATP binding. Residues 126 to 129 (DEVD) carry the DEVD box motif. Residues 190 to 349 (LVKHFLLNLN…SVHLERDGTL (160 aa)) form the Helicase C-terminal domain.

The protein belongs to the DEAD box helicase family.

The catalysed reaction is ATP + H2O = ADP + phosphate + H(+). The protein is Probable ATP-dependent RNA helicase MG308 homolog of Mycoplasma pneumoniae (strain ATCC 29342 / M129 / Subtype 1) (Mycoplasmoides pneumoniae).